A 323-amino-acid polypeptide reads, in one-letter code: tRNA U34 carboxymethyltransferase (323 aa).

Carboxy-S-adenosyl-L-methionine contacts are provided by residues Lys-91, Trp-105, Lys-110, Gly-130, 152-154, 181-182, Met-196, Tyr-200, and Arg-315; these read DPT and IE.

Belongs to the class I-like SAM-binding methyltransferase superfamily. CmoB family. Homotetramer.

The catalysed reaction is carboxy-S-adenosyl-L-methionine + 5-hydroxyuridine(34) in tRNA = 5-carboxymethoxyuridine(34) in tRNA + S-adenosyl-L-homocysteine + H(+). Functionally, catalyzes carboxymethyl transfer from carboxy-S-adenosyl-L-methionine (Cx-SAM) to 5-hydroxyuridine (ho5U) to form 5-carboxymethoxyuridine (cmo5U) at position 34 in tRNAs. The protein is tRNA U34 carboxymethyltransferase of Escherichia coli O8 (strain IAI1).